A 359-amino-acid chain; its full sequence is Peptide chain release factor 1 (359 aa).

Position 235 is an N5-methylglutamine (glutamine 235).

Belongs to the prokaryotic/mitochondrial release factor family. Post-translationally, methylated by PrmC. Methylation increases the termination efficiency of RF1.

The protein resides in the cytoplasm. Its function is as follows. Peptide chain release factor 1 directs the termination of translation in response to the peptide chain termination codons UAG and UAA. The chain is Peptide chain release factor 1 from Methylibium petroleiphilum (strain ATCC BAA-1232 / LMG 22953 / PM1).